The sequence spans 282 residues: tRNA U34 carboxymethyltransferase (282 aa).

Carboxy-S-adenosyl-L-methionine is bound by residues Lys54, Trp68, Lys73, Gly92, Asp114–Ser116, Tyr161, and Arg276.

It belongs to the class I-like SAM-binding methyltransferase superfamily. CmoB family. In terms of assembly, homotetramer.

The enzyme catalyses carboxy-S-adenosyl-L-methionine + 5-hydroxyuridine(34) in tRNA = 5-carboxymethoxyuridine(34) in tRNA + S-adenosyl-L-homocysteine + H(+). Functionally, catalyzes carboxymethyl transfer from carboxy-S-adenosyl-L-methionine (Cx-SAM) to 5-hydroxyuridine (ho5U) to form 5-carboxymethoxyuridine (cmo5U) at position 34 in tRNAs. The protein is tRNA U34 carboxymethyltransferase of Campylobacter fetus subsp. fetus (strain 82-40).